Reading from the N-terminus, the 257-residue chain is 1-(5-phosphoribosyl)-5-[(5-phosphoribosylamino)methylideneamino] imidazole-4-carboxamide isomerase (257 aa).

Catalysis depends on Asp-8, which acts as the Proton acceptor. Catalysis depends on Asp-129, which acts as the Proton donor.

It belongs to the HisA/HisF family.

It is found in the cytoplasm. It carries out the reaction 1-(5-phospho-beta-D-ribosyl)-5-[(5-phospho-beta-D-ribosylamino)methylideneamino]imidazole-4-carboxamide = 5-[(5-phospho-1-deoxy-D-ribulos-1-ylimino)methylamino]-1-(5-phospho-beta-D-ribosyl)imidazole-4-carboxamide. The protein operates within amino-acid biosynthesis; L-histidine biosynthesis; L-histidine from 5-phospho-alpha-D-ribose 1-diphosphate: step 4/9. The sequence is that of 1-(5-phosphoribosyl)-5-[(5-phosphoribosylamino)methylideneamino] imidazole-4-carboxamide isomerase from Gloeothece citriformis (strain PCC 7424) (Cyanothece sp. (strain PCC 7424)).